A 195-amino-acid chain; its full sequence is Glycerol-3-phosphate acyltransferase (195 aa).

A run of 5 helical transmembrane segments spans residues 2–22 (LWIF…GLFI), 52–72 (YGVA…LMAY), 78–98 (WIFI…SIFM), 112–132 (VFLA…LAVI), and 145–165 (FAVA…VPLA).

Belongs to the PlsY family. In terms of assembly, probably interacts with PlsX.

It localises to the cell inner membrane. It catalyses the reaction an acyl phosphate + sn-glycerol 3-phosphate = a 1-acyl-sn-glycero-3-phosphate + phosphate. It functions in the pathway lipid metabolism; phospholipid metabolism. In terms of biological role, catalyzes the transfer of an acyl group from acyl-phosphate (acyl-PO(4)) to glycerol-3-phosphate (G3P) to form lysophosphatidic acid (LPA). This enzyme utilizes acyl-phosphate as fatty acyl donor, but not acyl-CoA or acyl-ACP. This chain is Glycerol-3-phosphate acyltransferase, found in Maridesulfovibrio salexigens (strain ATCC 14822 / DSM 2638 / NCIMB 8403 / VKM B-1763) (Desulfovibrio salexigens).